The following is a 382-amino-acid chain: Cytoplasmic tRNA 2-thiolation protein 2 (382 aa).

The protein belongs to the CTU2/NCS2 family.

It is found in the cytoplasm. Its pathway is tRNA modification; 5-methoxycarbonylmethyl-2-thiouridine-tRNA biosynthesis. Functionally, plays a central role in 2-thiolation of mcm(5)S(2)U at tRNA wobble positions of tRNA(Lys), tRNA(Glu) and tRNA(Gln). May act by forming a heterodimer with NCS6 that ligates sulfur from thiocarboxylated URM1 onto the uridine of tRNAs at wobble position. Prior mcm(5) tRNA modification by the elongator complex is required for 2-thiolation. May also be involved in protein urmylation. This Phaeosphaeria nodorum (strain SN15 / ATCC MYA-4574 / FGSC 10173) (Glume blotch fungus) protein is Cytoplasmic tRNA 2-thiolation protein 2.